The sequence spans 220 residues: Iron-sulfur cluster repair protein YtfE (220 aa).

The protein belongs to the RIC family. YtfE subfamily. Homodimer.

The protein localises to the cytoplasm. Functionally, di-iron-containing protein involved in the repair of iron-sulfur clusters damaged by oxidative and nitrosative stress conditions. This is Iron-sulfur cluster repair protein YtfE from Enterobacter sp. (strain 638).